Consider the following 471-residue polypeptide: Extracellular endo-alpha-(1-&gt;5)-L-arabinanase (471 aa).

A signal peptide spans 1–19 (MRFLFLMITLTALTGYILA). The Proton acceptor role is filled by Asp32. Residues Asp32, Gly117, 167–170 (NALD), 187–189 (SWF), and 219–223 (HSSME) contribute to the substrate site. Residue Glu223 is the Proton donor of the active site. His314 serves as a coordination point for Ca(2+).

It belongs to the glycosyl hydrolase 43 family. Monomer. Requires Ca(2+) as cofactor.

Its subcellular location is the secreted. The enzyme catalyses Endohydrolysis of (1-&gt;5)-alpha-arabinofuranosidic linkages in (1-&gt;5)-arabinans.. It participates in glycan metabolism; L-arabinan degradation. In terms of biological role, involved in the degradation of arabinan and is a key enzyme in the complete degradation of the plant cell wall. Catalyzes the internal cleavage of alpha-(1-&gt;5)-L-arabinofuranosyl residues in different arabinan-containing polysaccharides, and releases arabinotriose and arabinobiose as end products. It acts on branched arabinan (from sugar beet), but more slowly when compared to linear or debranched arabinan. The sequence is that of Extracellular endo-alpha-(1-&gt;5)-L-arabinanase from Thermotoga petrophila (strain ATCC BAA-488 / DSM 13995 / JCM 10881 / RKU-1).